The following is a 421-amino-acid chain: Ig-like V-type domain-containing protein FAM187A (421 aa).

Residues 1 to 18 (MNLAHTTVLLWAWGSLQA) form the signal peptide. The Extracellular portion of the chain corresponds to 19-377 (FEIVEKENIF…VSFSDPETRA (359 aa)). Residues 268-362 (PWLPQVPIQF…IAGFRLGVTS (95 aa)) enclose the Ig-like V-type domain. Cys290 and Cys346 are oxidised to a cystine. Asn318 is a glycosylation site (N-linked (GlcNAc...) asparagine). The helical transmembrane segment at 378–398 (ALGLILIGYMLITVIFISIHL) threads the bilayer. Residues 399 to 421 (CRCCCYLFRFCPNFSPRLSRPQL) are Cytoplasmic-facing.

This sequence belongs to the FAM187 family.

It is found in the membrane. The sequence is that of Ig-like V-type domain-containing protein FAM187A (FAM187A) from Bos taurus (Bovine).